The primary structure comprises 302 residues: Protein KTI12 homolog (302 aa).

8–15 (GQPCSGKS) provides a ligand contact to ATP. The calmodulin-binding stretch occupies residues 260–273 (LRRTFVKLMGQSSL).

It belongs to the KTI12 family. As to quaternary structure, interacts with the elongator complex. Binds to calmodulin in a calcium-dependent manner. As to expression, expressed in roots, hypocotyls, cotyledons, shoot apices, stems, inflorescence apices, leaves and flowers.

The protein resides in the cytoplasm. It is found in the nucleus. Functionally, elongator complex-associated factor that is not a structural subunit but rather transiently contacts the complex. Regulates both meristem activity and organ growth; acts as a positive regulator of adaxial leaf patterning by modulating both cell division and differentiation. Required for an early step in synthesis of 5-carbamoylmethyl (ncm5) groups present on uridines (ncm5U) at the wobble position in tRNA. The polypeptide is Protein KTI12 homolog (Arabidopsis thaliana (Mouse-ear cress)).